We begin with the raw amino-acid sequence, 87 residues long: Protein moa-2 (87 aa).

The tract at residues Gly23–Ser87 is disordered. Basic and acidic residues-rich tracts occupy residues Met26–Pro39 and Arg50–Pro63.

This is Protein moa-2 from Caenorhabditis elegans.